We begin with the raw amino-acid sequence, 563 residues long: Protein NOXP20 (563 aa).

Residues 1–84 (MSDDAGDTLA…ANALEPPLNG (84 aa)) are disordered. Low complexity predominate over residues 56-68 (AAVQGAGAAAIGP). At Ser-120 the chain carries Phosphoserine. The segment at 165 to 206 (VNSGSSEGAQPNTENGVPEITDAATDQGPAESPPTSPSSASR) is disordered. Over residues 166 to 179 (NSGSSEGAQPNTEN) the composition is skewed to polar residues. Phosphothreonine occurs at positions 185 and 189. Ser-196 bears the Phosphoserine mark. At Thr-199 the chain carries Phosphothreonine. Phosphoserine is present on residues Ser-202 and Ser-261. The stretch at 343-367 (AAKELENEENQEEQGLEEKGEEFAR) forms a coiled coil. The disordered stretch occupies residues 411 to 436 (SEEETKKEEKEEKSQDPQEDKKEEKK).

It belongs to the FAM114 family.

The protein resides in the cytoplasm. Functionally, may play a role in neuronal cell development. The polypeptide is Protein NOXP20 (FAM114A1) (Homo sapiens (Human)).